Here is a 724-residue protein sequence, read N- to C-terminus: Long-chain-fatty-acid--CoA ligase ACSBG1 (724 aa).

Residues 1 to 51 are disordered; the sequence is MPRNSGAGYGCPHGDPSMLDSRETPQESRQDMTVGTTQEKLKTSSLTDRQP. Basic and acidic residues predominate over residues 20-30; it reads DSRETPQESRQ. A compositionally biased stretch (polar residues) spans 31–51; the sequence is DMTVGTTQEKLKTSSLTDRQP. Phosphoserine occurs at positions 53 and 56. ATP-binding positions include 282-290, 472-477, Asp550, and Arg565; these read TSGTTGNPK and AGYGLS. At Tyr658 the chain carries Phosphotyrosine. Position 701 (Lys701) interacts with ATP.

This sequence belongs to the ATP-dependent AMP-binding enzyme family. Bubblegum subfamily.

The protein localises to the cytoplasm. It localises to the cytoplasmic vesicle. It is found in the microsome. Its subcellular location is the endoplasmic reticulum. The protein resides in the cell membrane. The enzyme catalyses a long-chain fatty acid + ATP + CoA = a long-chain fatty acyl-CoA + AMP + diphosphate. The catalysed reaction is (E)-hexadec-2-enoate + ATP + CoA = (2E)-hexadecenoyl-CoA + AMP + diphosphate. It catalyses the reaction hexadecanoate + ATP + CoA = hexadecanoyl-CoA + AMP + diphosphate. In terms of biological role, catalyzes the conversion of fatty acids such as long-chain and very long-chain fatty acids to their active form acyl-CoAs for both synthesis of cellular lipids, and degradation via beta-oxidation. Can activate diverse saturated, monosaturated and polyunsaturated fatty acids. The sequence is that of Long-chain-fatty-acid--CoA ligase ACSBG1 from Macaca fascicularis (Crab-eating macaque).